Reading from the N-terminus, the 268-residue chain is MLPSIAKHAASHQIHPLKKHGQNFIFDGSLCDKIVRASGLEENSNVLEIGPGTGGLTRSILHKNPKLLTVIETDERCIPLLNEIKQYHPNLNIIKQDALKLKLSDLNTNKITIISNLPYHIGTELVIRWLKESSLVASMTLMLQKEVVERICAKPSTKAYGRLSVICSLIATVEKCFDVAPTAFYPPPKVYSAIVKLTPLENIPNSDLISKVELITKMAFAGRRKMIKSSLKNLAPNISELLAKLNISNNCRAENLTPNDYLSLASLI.

Positions 23, 25, 50, 72, 97, and 116 each coordinate S-adenosyl-L-methionine.

The protein belongs to the class I-like SAM-binding methyltransferase superfamily. rRNA adenine N(6)-methyltransferase family. RsmA subfamily.

It localises to the cytoplasm. The enzyme catalyses adenosine(1518)/adenosine(1519) in 16S rRNA + 4 S-adenosyl-L-methionine = N(6)-dimethyladenosine(1518)/N(6)-dimethyladenosine(1519) in 16S rRNA + 4 S-adenosyl-L-homocysteine + 4 H(+). Functionally, specifically dimethylates two adjacent adenosines (A1518 and A1519) in the loop of a conserved hairpin near the 3'-end of 16S rRNA in the 30S particle. May play a critical role in biogenesis of 30S subunits. The sequence is that of Ribosomal RNA small subunit methyltransferase A from Rickettsia bellii (strain OSU 85-389).